The primary structure comprises 165 residues: Thiol peroxidase (165 aa).

One can recognise a Thioredoxin domain in the interval 18–165 (PAVGSPAPAF…YEAALAALGA (148 aa)). The active-site Cysteine sulfenic acid (-SOH) intermediate is C60. A disulfide bridge links C60 with C93.

It belongs to the peroxiredoxin family. Tpx subfamily. Homodimer.

The catalysed reaction is a hydroperoxide + [thioredoxin]-dithiol = an alcohol + [thioredoxin]-disulfide + H2O. Its function is as follows. Thiol-specific peroxidase that catalyzes the reduction of hydrogen peroxide and organic hydroperoxides to water and alcohols, respectively. Plays a role in cell protection against oxidative stress by detoxifying peroxides. The polypeptide is Thiol peroxidase (Mycobacterium bovis (strain ATCC BAA-935 / AF2122/97)).